The chain runs to 204 residues: Holliday junction branch migration complex subunit RuvA (204 aa).

The segment at 1–64 is domain I; sequence MIAQIRGKLI…QDSILLVGFC (64 aa). Positions 65 to 143 are domain II; sequence TENEKQLFKL…GWTSKEQITF (79 aa). The tract at residues 144–154 is flexible linker; it reads INNKKDAIDQS. The tract at residues 154–204 is domain III; the sequence is SVMEEDAISALINLGYKSQAAKDAIDRVISEGGENKSLDVILKKALKVLAM.

The protein belongs to the RuvA family. In terms of assembly, homotetramer. Forms an RuvA(8)-RuvB(12)-Holliday junction (HJ) complex. HJ DNA is sandwiched between 2 RuvA tetramers; dsDNA enters through RuvA and exits via RuvB. An RuvB hexamer assembles on each DNA strand where it exits the tetramer. Each RuvB hexamer is contacted by two RuvA subunits (via domain III) on 2 adjacent RuvB subunits; this complex drives branch migration. In the full resolvosome a probable DNA-RuvA(4)-RuvB(12)-RuvC(2) complex forms which resolves the HJ.

The protein resides in the cytoplasm. The RuvA-RuvB-RuvC complex processes Holliday junction (HJ) DNA during genetic recombination and DNA repair, while the RuvA-RuvB complex plays an important role in the rescue of blocked DNA replication forks via replication fork reversal (RFR). RuvA specifically binds to HJ cruciform DNA, conferring on it an open structure. The RuvB hexamer acts as an ATP-dependent pump, pulling dsDNA into and through the RuvAB complex. HJ branch migration allows RuvC to scan DNA until it finds its consensus sequence, where it cleaves and resolves the cruciform DNA. This is Holliday junction branch migration complex subunit RuvA from Syntrophus aciditrophicus (strain SB).